We begin with the raw amino-acid sequence, 419 residues long: MEEREGTNINNIPTSFGLKQHETPLPPPGYPPRSENPNLFPVGQSSTSSAAAAVKPSENVAPPFSLTMPVENSSSELKKKRGRPRKYNPDGSLAVTLSPMPISSSVPLTSEFGSRKRGRGRGRGRGRGRGRGQGQGSREPNNNNNDNNWLKNPQMFEFNNNTPTSGGGGPAEIVSPSFTPHVLTVNAGEDVTMKIMTFSQQGSRAICILSANGPISNVTLRQSMTSGGTLTYEGHFEILSLTGSFIPSESGGTRSRAGGMSVSLAGQDGRVFGGGLAGLFIAAGPVQVMVGSFIAGQEESQQQQQQIKKQRRERLGIPTTTQASNISFGGSAEDPKARYGLNKPVVIQPPPVSAPPVSFSHEPSTNTVHGYYANNTANHIKDLFSSLPGEDREEDEDDLEGEDDEEFGGHSESDTEVPS.

Disordered stretches follow at residues methionine 1–glycine 168, glutamine 301–alanine 337, and aspartate 382–serine 419. The Bipartite nuclear localization signal signature appears at lysine 78–lysine 86. Positions lysine 78–aspartate 90 form a DNA-binding region, a.T hook. A compositionally biased stretch (polar residues) spans proline 101–phenylalanine 112. Over residues arginine 115 to glycine 130 the composition is skewed to basic residues. Residues glycine 136–asparagine 148 are compositionally biased toward low complexity. The 141-residue stretch at valine 174 to arginine 314 folds into the PPC domain. Residues proline 318–phenylalanine 328 show a composition bias toward polar residues. A compositionally biased stretch (acidic residues) spans aspartate 391 to glutamate 406.

In terms of assembly, homodimer. Interacts with AHL3. In terms of tissue distribution, predominantly expressed in the stele of the root meristem with a specificity to the procambium.

Its subcellular location is the nucleus. Its function is as follows. Transcription factor that specifically binds AT-rich DNA sequences related to the nuclear matrix attachment regions (MARs). Acts redundantly with AHL3 to regulate the formation of tissue boundary between the xylem and procambium in the root meristem. Cell-to-cell movement of AHL4 from the procambium to the xylem is critical for its function in root vascular patterning. The polypeptide is AT-hook motif nuclear-localized protein 4 (Arabidopsis thaliana (Mouse-ear cress)).